The sequence spans 354 residues: Uroporphyrinogen decarboxylase (354 aa).

Substrate-binding positions include 27 to 31 (RQAGR), Asp-77, Tyr-154, Ser-209, and His-327.

This sequence belongs to the uroporphyrinogen decarboxylase family. In terms of assembly, homodimer.

Its subcellular location is the cytoplasm. The catalysed reaction is uroporphyrinogen III + 4 H(+) = coproporphyrinogen III + 4 CO2. It participates in porphyrin-containing compound metabolism; protoporphyrin-IX biosynthesis; coproporphyrinogen-III from 5-aminolevulinate: step 4/4. Functionally, catalyzes the decarboxylation of four acetate groups of uroporphyrinogen-III to yield coproporphyrinogen-III. The polypeptide is Uroporphyrinogen decarboxylase (Pseudomonas syringae pv. syringae (strain B728a)).